A 426-amino-acid polypeptide reads, in one-letter code: Pannexin-1 (426 aa).

The Cytoplasmic portion of the chain corresponds to Met-1–Cys-40. S-nitrosocysteine is present on Cys-40. Residues Ile-41–Gly-61 form a helical membrane-spanning segment. Topologically, residues Thr-62–His-106 are extracellular. Disulfide bonds link Cys-66–Cys-264 and Cys-84–Cys-245. A helical transmembrane segment spans residues Lys-107–Trp-127. The Cytoplasmic segment spans residues Arg-128 to Arg-216. The residue at position 198 (Tyr-198) is a Phosphotyrosine. Residues Leu-217–Ser-237 form a helical membrane-spanning segment. The Extracellular portion of the chain corresponds to Ser-238–Leu-277. The N-linked (GlcNAc...) asparagine glycan is linked to Asn-254. Residues Ile-278–Phe-298 form a helical membrane-spanning segment. The Cytoplasmic segment spans residues Arg-299–Cys-426. S-nitrosocysteine is present on Cys-346.

The protein belongs to the pannexin family. As to quaternary structure, homoheptameric. S-nitrosylation inhibits channel currents and ATP release. In terms of processing, N-glycosylation may play a role in cell surface targeting. Exists in three glycosylation states: non-glycosylated (GLY0), high-mannose glycosylated (GLY1), and fully mature glycosylated (GLY2). Post-translationally, phosphorylated at Tyr-198 by SRC. Phosphorylation activates ATP release. Constitutively phosphorylated in vascular smooth muscle cells. Cleaved by CASP3 and CASP7 during apoptosis. Cleavage opens the channel for the release of metabolites and induces plasma membrane permeability during apoptosis. Widely expressed, including in cartilage, skin, spleen and brain.

The protein localises to the cell membrane. Its subcellular location is the endoplasmic reticulum membrane. The enzyme catalyses chloride(in) = chloride(out). It carries out the reaction iodide(out) = iodide(in). It catalyses the reaction Ca(2+)(in) = Ca(2+)(out). The catalysed reaction is ATP(in) = ATP(out). The enzyme catalyses K(+)(in) = K(+)(out). It carries out the reaction Na(+)(in) = Na(+)(out). It catalyses the reaction nitrate(in) = nitrate(out). The catalysed reaction is L-aspartate(out) = L-aspartate(in). The enzyme catalyses L-glutamate(out) = L-glutamate(in). It carries out the reaction D-gluconate(in) = D-gluconate(out). It catalyses the reaction spermidine(in) = spermidine(out). Functionally, ion channel involved in a variety of physiological functions such as blood pressure regulation, apoptotic cell clearance and oogenesis. Forms anion-selective channels with relatively low conductance and an order of permeabilities: nitrate&gt;iodide&gt;chlroride&gt;&gt;aspartate=glutamate=gluconate. Can release ATP upon activation through phosphorylation or cleavage at C-terminus. May play a role as a Ca(2+)-leak channel to regulate ER Ca(2+) homeostasis. In terms of biological role, during apoptosis and after cleavage by caspases of the C-terminal tail, acts as a plasma membrane channel which mediates the regulated release of find-me signals, such as nucleotides ATP and UTP, and selective plasme membrane permeability. The sequence is that of Pannexin-1 from Mus musculus (Mouse).